The following is a 240-amino-acid chain: Ribonuclease 3 (240 aa).

Positions 9–141 constitute an RNase III domain; sequence VEEFQKKTGI…LLAAIYLDQG (133 aa). Residue Glu54 participates in Mg(2+) binding. Residue Asp58 is part of the active site. Residues Asp127 and Glu130 each contribute to the Mg(2+) site. The active site involves Glu130. Residues 168 to 237 form the DRBM domain; sequence DYKTALQEIV…ARIAYEKLLK (70 aa).

Belongs to the ribonuclease III family. As to quaternary structure, homodimer. Mg(2+) serves as cofactor.

It is found in the cytoplasm. The enzyme catalyses Endonucleolytic cleavage to 5'-phosphomonoester.. Its function is as follows. Digests double-stranded RNA. Involved in the processing of primary rRNA transcript to yield the immediate precursors to the large and small rRNAs (23S and 16S). Processes some mRNAs, and tRNAs when they are encoded in the rRNA operon. Processes pre-crRNA and tracrRNA of type II CRISPR loci if present in the organism. The polypeptide is Ribonuclease 3 (Thermotoga petrophila (strain ATCC BAA-488 / DSM 13995 / JCM 10881 / RKU-1)).